A 201-amino-acid chain; its full sequence is Small ribosomal subunit protein uS4c (201 aa).

The interval 17-36 (ALPGLTRKTPKSGSNLKKKF) is disordered. Residues 89–157 (MRLDNILFRL…VQNYIASSDP (69 aa)) form the S4 RNA-binding domain.

Belongs to the universal ribosomal protein uS4 family. Part of the 30S ribosomal subunit. Contacts protein S5. The interaction surface between S4 and S5 is involved in control of translational fidelity.

The protein resides in the plastid. Its subcellular location is the chloroplast. In terms of biological role, one of the primary rRNA binding proteins, it binds directly to 16S rRNA where it nucleates assembly of the body of the 30S subunit. With S5 and S12 plays an important role in translational accuracy. The protein is Small ribosomal subunit protein uS4c (rps4) of Agrostis stolonifera (Creeping bentgrass).